We begin with the raw amino-acid sequence, 207 residues long: Serotonin N-acetyltransferase (207 aa).

Residues 1–29 (MSTPSVHCLKPSPLHLPSGIPGSPGRQRR) form a disordered region. The segment at 28–35 (RRHTLPAN) is YWHAZ-binding. Position 31 is a phosphothreonine; by PKA (Thr-31). The region spanning 35–196 (NEFRCLTPED…TFTEMHCSLR (162 aa)) is the N-acetyltransferase domain. Leu-124 contributes to the substrate binding site. Residues 124–126 (LAV) and 132–137 (QQGKGS) contribute to the acetyl-CoA site. A substrate-binding site is contributed by Met-159. An acetyl-CoA-binding site is contributed by 168–170 (YQR). Phosphoserine; by PKA is present on Ser-205.

It belongs to the acetyltransferase family. AANAT subfamily. In terms of assembly, monomer. Interacts with several 14-3-3 proteins, including YWHAB, YWHAE, YWHAG and YWHAZ, preferentially when phosphorylated at Thr-31. Phosphorylation on Ser-205 also allows binding to YWHAZ, but with a 10-fold lower affinity. The interaction with YWHAZ considerably increases affinity for arylalkylamines and acetyl-CoA and protects the enzyme from dephosphorylation and proteasomal degradation. It may also prevent thiol-dependent inactivation. The physiological stoichiometry of the interaction is not clear. In vitro studies show either 1:2 (i.e. 1 AANAT molecule per YWHAZ dimer) or 2:2. Post-translationally, cAMP-dependent phosphorylation on both N-terminal Thr-31 and C-terminal Ser-205 regulates AANAT activity by promoting interaction with 14-3-3 proteins. Highest expression in the pineal gland, followed by retina. Expressed at much lower levels in brainstem and pituitary gland. AANAT activity also detected at low levels in the olfactory lobe.

Its subcellular location is the cytoplasm. The enzyme catalyses a 2-arylethylamine + acetyl-CoA = an N-acetyl-2-arylethylamine + CoA + H(+). It participates in aromatic compound metabolism; melatonin biosynthesis; melatonin from serotonin: step 1/2. Functionally, controls the night/day rhythm of melatonin production in the pineal gland. Catalyzes the N-acetylation of serotonin into N-acetylserotonin, the penultimate step in the synthesis of melatonin. The polypeptide is Serotonin N-acetyltransferase (AANAT) (Ovis aries (Sheep)).